The sequence spans 504 residues: Glycine--tRNA ligase (504 aa).

Substrate is bound by residues Arg-99 and Glu-189. Residues Arg-221 to Glu-223, Phe-231 to Leu-236, Glu-306 to Ile-307, and Gly-365 to Arg-368 contribute to the ATP site. Leu-236 to Glu-240 contacts substrate. A substrate-binding site is contributed by Glu-361–Gly-365.

This sequence belongs to the class-II aminoacyl-tRNA synthetase family. Homodimer.

Its subcellular location is the cytoplasm. The enzyme catalyses tRNA(Gly) + glycine + ATP = glycyl-tRNA(Gly) + AMP + diphosphate. Its function is as follows. Catalyzes the attachment of glycine to tRNA(Gly). This Deinococcus geothermalis (strain DSM 11300 / CIP 105573 / AG-3a) protein is Glycine--tRNA ligase.